The chain runs to 453 residues: Ankyrin repeat and SOCS box protein 16 (453 aa).

7 ANK repeats span residues 56-85, 110-139, 142-171, 175-204, 209-238, 242-279, and 283-312; these read CRDPAVHQALFSGNLQQVQALFQDEEAANM, KQTAPLAIATARGYTDCARHLIRQGAELDA, GGRAALHEACARAQFDCVRLLLTFGAKANV, EGTTPLHLCTIPESLQCAKLLLEAGATVNL, SQETPLHVAAARGLEQHVALYLEHGADVGL, QGETALNTACAGAEGPGSCRRHQAAARRLLEAGADARA, and KRHTPLHNACANGCGGLAELLLRYGARAEV. An SOCS box domain is found at 398-450; it reads YSSALCMVNQPRQLQHLARLAVRARLGSRCRQGATRLPLPPLLRDYLLLRVEG.

This sequence belongs to the ankyrin SOCS box (ASB) family.

Its pathway is protein modification; protein ubiquitination. In terms of biological role, may be a substrate-recognition component of a SCF-like ECS (Elongin-Cullin-SOCS-box protein) E3 ubiquitin-protein ligase complex which mediates the ubiquitination and subsequent proteasomal degradation of target proteins. In Homo sapiens (Human), this protein is Ankyrin repeat and SOCS box protein 16 (ASB16).